The sequence spans 255 residues: uncharacterized protein (255 aa).

2 disordered regions span residues Cys112–Gly145 and Gly157–Gln183.

This is an uncharacterized protein from Rhodospirillum rubrum.